A 223-amino-acid polypeptide reads, in one-letter code: MIGELDFPFLGAGSTGGACGFAVANPPLYGMVSAGGPSVFNNGIGCGTCFQILCNGHPACSRRPITVTITDECPGGPCASEPAHFDLSGKAMGALARPGQGDRLRSAGVLRVYYRRVECLYRRTNIAFRMDPGANPYYISFVVEYENGDGDLAYIEIQPADGEFIPMQEMRSAVWKISSGSPLTGPFNIRLTSAESHKVVLAYNVIPANWKPNETYRSVVNFK.

The Expansin-like EG45 domain maps to 16–124 (GGACGFAVAN…RRVECLYRRT (109 aa)). 3 disulfides stabilise this stretch: Cys-19–Cys-46, Cys-49–Cys-119, and Cys-54–Cys-60. The Expansin-like CBD domain occupies 137-218 (YYISFVVEYE…NWKPNETYRS (82 aa)). An N-linked (GlcNAc...) asparagine glycan is attached at Asn-213.

It belongs to the expansin family. Expansin B subfamily.

The protein resides in the secreted. It is found in the cell wall. Its subcellular location is the membrane. May cause loosening and extension of plant cell walls by disrupting non-covalent bonding between cellulose microfibrils and matrix glucans. This is Expansin-B6 from Arabidopsis thaliana (Mouse-ear cress).